We begin with the raw amino-acid sequence, 128 residues long: Probable 4-amino-4-deoxy-L-arabinose-phosphoundecaprenol flippase subunit ArnF (128 aa).

At 1 to 2 the chain is on the cytoplasmic side; the sequence is MG. Residues 3-23 traverse the membrane as a helical segment; the sequence is LIWGLFSVIIASVAQLSLGFA. Topologically, residues 24-35 are periplasmic; sequence ASHLPPMTHLWD. Residues 36-56 traverse the membrane as a helical segment; it reads FIAALLAFGLDARILLLGLLG. Residues 57 to 76 lie on the Cytoplasmic side of the membrane; the sequence is YLLSVFCWYKTLHKLALSKA. The helical transmembrane segment at 77-97 threads the bilayer; sequence YALLSMSYVLVWIASMVLPGW. Topologically, residues 98–100 are periplasmic; that stretch reads EGT. Residues 101–121 traverse the membrane as a helical segment; it reads FSLKALLGVACIMSGLMLIFL. Residues 122 to 128 are Cytoplasmic-facing; that stretch reads PTTKQRY.

It belongs to the ArnF family. As to quaternary structure, heterodimer of ArnE and ArnF.

It is found in the cell inner membrane. Its pathway is bacterial outer membrane biogenesis; lipopolysaccharide biosynthesis. Its function is as follows. Translocates 4-amino-4-deoxy-L-arabinose-phosphoundecaprenol (alpha-L-Ara4N-phosphoundecaprenol) from the cytoplasmic to the periplasmic side of the inner membrane. This Shigella boydii serotype 4 (strain Sb227) protein is Probable 4-amino-4-deoxy-L-arabinose-phosphoundecaprenol flippase subunit ArnF.